The primary structure comprises 456 residues: Bifunctional protein GlmU (456 aa).

The pyrophosphorylase stretch occupies residues Met-1 to Lys-228. UDP-N-acetyl-alpha-D-glucosamine contacts are provided by residues Leu-11 to Gly-14, Lys-25, Gln-75, Gly-80 to Thr-81, Tyr-102 to Asp-104, Gly-138, Glu-153, Asn-168, and Asn-226. Asp-104 lines the Mg(2+) pocket. Asn-226 contributes to the Mg(2+) binding site. The interval Leu-229–Ala-249 is linker. Residues Gly-250 to Gln-456 are N-acetyltransferase. Residues Arg-332 and Lys-350 each contribute to the UDP-N-acetyl-alpha-D-glucosamine site. Residue His-362 is the Proton acceptor of the active site. The UDP-N-acetyl-alpha-D-glucosamine site is built by Tyr-365 and Asn-376. Acetyl-CoA is bound by residues Ala-379, Asn-385 to Tyr-386, Ser-404, Ala-422, and Arg-439.

The protein in the N-terminal section; belongs to the N-acetylglucosamine-1-phosphate uridyltransferase family. This sequence in the C-terminal section; belongs to the transferase hexapeptide repeat family. As to quaternary structure, homotrimer. The cofactor is Mg(2+).

It is found in the cytoplasm. It catalyses the reaction alpha-D-glucosamine 1-phosphate + acetyl-CoA = N-acetyl-alpha-D-glucosamine 1-phosphate + CoA + H(+). The catalysed reaction is N-acetyl-alpha-D-glucosamine 1-phosphate + UTP + H(+) = UDP-N-acetyl-alpha-D-glucosamine + diphosphate. Its pathway is nucleotide-sugar biosynthesis; UDP-N-acetyl-alpha-D-glucosamine biosynthesis; N-acetyl-alpha-D-glucosamine 1-phosphate from alpha-D-glucosamine 6-phosphate (route II): step 2/2. It participates in nucleotide-sugar biosynthesis; UDP-N-acetyl-alpha-D-glucosamine biosynthesis; UDP-N-acetyl-alpha-D-glucosamine from N-acetyl-alpha-D-glucosamine 1-phosphate: step 1/1. It functions in the pathway bacterial outer membrane biogenesis; LPS lipid A biosynthesis. In terms of biological role, catalyzes the last two sequential reactions in the de novo biosynthetic pathway for UDP-N-acetylglucosamine (UDP-GlcNAc). The C-terminal domain catalyzes the transfer of acetyl group from acetyl coenzyme A to glucosamine-1-phosphate (GlcN-1-P) to produce N-acetylglucosamine-1-phosphate (GlcNAc-1-P), which is converted into UDP-GlcNAc by the transfer of uridine 5-monophosphate (from uridine 5-triphosphate), a reaction catalyzed by the N-terminal domain. The sequence is that of Bifunctional protein GlmU from Neisseria meningitidis serogroup B (strain ATCC BAA-335 / MC58).